The primary structure comprises 409 residues: NADH-quinone oxidoreductase subunit D (409 aa).

Belongs to the complex I 49 kDa subunit family. As to quaternary structure, NDH-1 is composed of 14 different subunits. Subunits NuoB, C, D, E, F, and G constitute the peripheral sector of the complex.

Its subcellular location is the cell inner membrane. The enzyme catalyses a quinone + NADH + 5 H(+)(in) = a quinol + NAD(+) + 4 H(+)(out). Its function is as follows. NDH-1 shuttles electrons from NADH, via FMN and iron-sulfur (Fe-S) centers, to quinones in the respiratory chain. The immediate electron acceptor for the enzyme in this species is believed to be ubiquinone. Couples the redox reaction to proton translocation (for every two electrons transferred, four hydrogen ions are translocated across the cytoplasmic membrane), and thus conserves the redox energy in a proton gradient. This is NADH-quinone oxidoreductase subunit D from Helicobacter acinonychis (strain Sheeba).